The sequence spans 288 residues: MVILDGKLVSKQIKQTLKKQIDTYLNKNYKKPKLAVILIGNDPASELYVSNKIKACNLVGIESVLLRFGQNITSEMLSDQINQLNNDNSVDAILLQLPLPKHLDEQEFLQAIDPLKDVDGFHYINQGKMLEGYDTIYPCTPIGIINLLKAYNIDVRSKDITIIGTSNIVGKPLAIMLSNMGATISMCNKNTKSLKKYTKRSDIVISTTGKQALIKKDMIKKNAIVIDVGIIKDPITNKIVGDVDFENVKELCSYITPVPGGVGPMTVSMLLENTFKLYKLHIKENYEN.

NADP(+) is bound by residues 164–166 (GTS) and Ile-230.

The protein belongs to the tetrahydrofolate dehydrogenase/cyclohydrolase family. Homodimer.

The enzyme catalyses (6R)-5,10-methylene-5,6,7,8-tetrahydrofolate + NADP(+) = (6R)-5,10-methenyltetrahydrofolate + NADPH. It catalyses the reaction (6R)-5,10-methenyltetrahydrofolate + H2O = (6R)-10-formyltetrahydrofolate + H(+). The protein operates within one-carbon metabolism; tetrahydrofolate interconversion. Catalyzes the oxidation of 5,10-methylenetetrahydrofolate to 5,10-methenyltetrahydrofolate and then the hydrolysis of 5,10-methenyltetrahydrofolate to 10-formyltetrahydrofolate. The chain is Bifunctional protein FolD from Mycoplasma mycoides subsp. mycoides SC (strain CCUG 32753 / NCTC 10114 / PG1).